Consider the following 388-residue polypeptide: Probable peptidoglycan glycosyltransferase FtsW (388 aa).

11 helical membrane passes run 16 to 36 (LVLIVLALITIGLVMVLSSSV), 54 to 74 (VFALGVGGLFAALVLMVPSQS), 82 to 102 (WFLLGLVLLALVLIFGREIGG), 109 to 129 (LVVMNFQPAEWMKIATILFLA), 144 to 164 (TAVIRLFLPFGIMAGLLLLQP), 167 to 187 (GTTVLIAGVLVGMLFIAGAPF), 189 to 209 (YFVITVLPIGAILAVLLINSP), 233 to 253 (SQALMAIGSGGITGSGLGASV), 277 to 297 (WLGVVILLSLYGLLLWRMFAV), 310 to 330 (ALVVYGVAIMFAGQLLINVGV), and 342 to 362 (LPFVSYGGSSLMMALLAIGLV).

The protein belongs to the SEDS family. FtsW subfamily.

The protein localises to the cell inner membrane. It catalyses the reaction [GlcNAc-(1-&gt;4)-Mur2Ac(oyl-L-Ala-gamma-D-Glu-L-Lys-D-Ala-D-Ala)](n)-di-trans,octa-cis-undecaprenyl diphosphate + beta-D-GlcNAc-(1-&gt;4)-Mur2Ac(oyl-L-Ala-gamma-D-Glu-L-Lys-D-Ala-D-Ala)-di-trans,octa-cis-undecaprenyl diphosphate = [GlcNAc-(1-&gt;4)-Mur2Ac(oyl-L-Ala-gamma-D-Glu-L-Lys-D-Ala-D-Ala)](n+1)-di-trans,octa-cis-undecaprenyl diphosphate + di-trans,octa-cis-undecaprenyl diphosphate + H(+). Its pathway is cell wall biogenesis; peptidoglycan biosynthesis. Its function is as follows. Peptidoglycan polymerase that is essential for cell division. The protein is Probable peptidoglycan glycosyltransferase FtsW of Thiomicrospira cyclica (strain DSM 14477 / JCM 11371 / ALM1) (Thioalkalimicrobium cyclicum).